Reading from the N-terminus, the 66-residue chain is Large ribosomal subunit protein bL33c (66 aa).

It belongs to the bacterial ribosomal protein bL33 family.

It localises to the plastid. The protein resides in the chloroplast. The polypeptide is Large ribosomal subunit protein bL33c (Illicium oligandrum (Star anise)).